Reading from the N-terminus, the 261-residue chain is Lys-63-specific deubiquitinase BRCC36 (261 aa).

An MPN domain is found at 6–149; it reads VHIQGDAFLV…YTCFQSVQAQ (144 aa). Zn(2+)-binding residues include H92, H94, and D105. A JAMM motif motif is present at residues 92–105; it reads HSHPHITVWPSHVD.

This sequence belongs to the peptidase M67A family. BRCC36 subfamily. In terms of assembly, component of the BRCA1-A complex, at least composed of brca1, bard1, uimc1/rap80, abraxas1, brcc3/brcc36, babam2 and babam1/nba1. In the BRCA1-A complex, interacts directly with abraxas1 and babam2. Component of the BRISC complex, at least composed of abraxas2, brcc3/brcc36, babam2 and babam1/nba1. Within the complex, interacts directly with abraxas2. Both the BRCA1-A complex and the BRISC complex bind polyubiquitin. Requires Zn(2+) as cofactor.

It is found in the nucleus. It localises to the cytoplasm. The protein localises to the cytoskeleton. Its subcellular location is the spindle pole. Metalloprotease that specifically cleaves 'Lys-63'-linked polyubiquitin chains. Does not have activity toward 'Lys-48'-linked polyubiquitin chains. Component of the BRCA1-A complex, a complex that specifically recognizes 'Lys-63'-linked ubiquitinated histones H2A and H2AX at DNA lesions sites, leading to target the brca1-bard1 heterodimer to sites of DNA damage at double-strand breaks (DSBs). In the BRCA1-A complex, it specifically removes 'Lys-63'-linked ubiquitin on histones H2A and H2AX, antagonizing the rnf8-dependent ubiquitination at double-strand breaks (DSBs). Catalytic subunit of the BRISC complex, a multiprotein complex that specifically cleaves 'Lys-63'-linked ubiquitin in various substrates. Mediates the specific 'Lys-63'-specific deubiquitination associated with the COP9 signalosome complex (CSN), via the interaction of the BRISC complex with the CSN complex. The BRISC complex is required for normal mitotic spindle assembly and microtubule attachment to kinetochores via its role in deubiquitinating numa1. Plays a role in interferon signaling via its role in the deubiquitination of the interferon receptor ifnar1; deubiquitination increases ifnar1 activity by enhancing its stability and cell surface expression. Acts as a regulator of the NLRP3 inflammasome by mediating deubiquitination of nlrp3. Down-regulates the response to bacterial lipopolysaccharide (LPS) via its role in ifnar1 deubiquitination. This chain is Lys-63-specific deubiquitinase BRCC36 (brcc3), found in Xenopus tropicalis (Western clawed frog).